The sequence spans 362 residues: Mortality factor 4-like protein 1 (362 aa).

The region spanning 12–51 (QEGERVLCFHGPLLYEAKCVKVAIKDKQVKYFIHYSGWNK) is the Tudor-knot domain. Residues 26–62 (YEAKCVKVAIKDKQVKYFIHYSGWNKKSAVRPRRSEK) form an interaction with KAT8 region. Residues 113–182 (RELQKANQEQ…RKKRARVDPT (70 aa)) are disordered. Residues 133-266 (PGKKTSGLQQ…VAGIKEYFNV (134 aa)) are sufficient for interaction with SIN3A. A Nuclear localization signal motif is present at residues 135 to 146 (KKTSGLQQKNVE). Lysine 143 is subject to N6-acetyllysine. The tract at residues 164-230 (STSETPQPPR…FYLPAKKNVD (67 aa)) is interaction with RB1-1. The tract at residues 188-342 (TFMNRVEVKV…FLKYLAKNSA (155 aa)) is sufficient for interaction with PHF12. The 172-residue stretch at 191-362 (NRVEVKVKIP…APPEYHRKAV (172 aa)) folds into the MRG domain. The interaction with RB1-2 stretch occupies residues 323–344 (LALLLNYLHDFLKYLAKNSATL).

Component of the NuA4 histone acetyltransferase complex which contains the catalytic subunit KAT5/TIP60 and the subunits EP400, TRRAP/PAF400, BRD8/SMAP, EPC1, DMAP1/DNMAP1, RUVBL1/TIP49, RUVBL2, ING3, actin, ACTL6A/BAF53A, MORF4L1/MRG15, MORF4L2/MRGX, MRGBP, YEATS4/GAS41, VPS72/YL1 and MEAF6. The NuA4 complex interacts with MYC and the adenovirus E1A protein. MORF4L1 may also participate in the formation of NuA4 related complexes which lack the KAT5/TIP60 catalytic subunit, but which include the SWI/SNF related protein SRCAP. Component of the mSin3A histone deacetylase complex, which includes SIN3A, HDAC2, ARID4B, MORF4L1, RBBP4/RbAp48, and RBBP7/RbAp46. May also interact with PHF12 and one or more as yet undefined members of the TLE (transducin-like enhancer of split) family of transcriptional repressors. Component of the SIN3B complex, which includes SIN3B, HDAC2 or HDAC1, PHF12 and MORF4L1. Interacts with RB1 and KAT8. Interacts with the N-terminus of MRFAP1. Found in a complex composed of MORF4L1, MRFAP1 and RB1. Interacts with the entire BRCA complex, which contains BRCA1, PALB2, BRCA2 and RAD51. Interacts with PALB2. Forms a complex with MSL1 and NUPR1.

The protein resides in the nucleus. Functionally, component of the NuA4 histone acetyltransferase (HAT) complex which is involved in transcriptional activation of select genes principally by acetylation of nucleosomal histones H4 and H2A. This modification may both alter nucleosome - DNA interactions and promote interaction of the modified histones with other proteins which positively regulate transcription. This complex may be required for the activation of transcriptional programs associated with oncogene and proto-oncogene mediated growth induction, tumor suppressor mediated growth arrest and replicative senescence, apoptosis, and DNA repair. The NuA4 complex ATPase and helicase activities seem to be, at least in part, contributed by the association of RUVBL1 and RUVBL2 with EP400. NuA4 may also play a direct role in DNA repair when directly recruited to sites of DNA damage. As part of the SIN3B complex represses transcription and counteracts the histone acetyltransferase activity of EP300 through the recognition H3K27ac marks by PHF12 and the activity of the histone deacetylase HDAC2. SIN3B complex is recruited downstream of the constitutively active genes transcriptional start sites through interaction with histones and mitigates histone acetylation and RNA polymerase II progression within transcribed regions contributing to the regulation of transcription. Required for homologous recombination repair (HRR) and resistance to mitomycin C (MMC). Involved in the localization of PALB2, BRCA2 and RAD51, but not BRCA1, to DNA-damage foci. The polypeptide is Mortality factor 4-like protein 1 (Morf4l1) (Mus musculus (Mouse)).